We begin with the raw amino-acid sequence, 152 residues long: Transcriptional repressor NrdR (152 aa).

The segment at 3–34 (CPFCSTEETKVIDSRLVSEGYQVRRRRECTNC) is a zinc-finger region. Residues 49-139 (PKIVKTDGYR…VYLSFENINE (91 aa)) enclose the ATP-cone domain.

It belongs to the NrdR family. Zn(2+) serves as cofactor.

Functionally, negatively regulates transcription of bacterial ribonucleotide reductase nrd genes and operons by binding to NrdR-boxes. In Actinobacillus succinogenes (strain ATCC 55618 / DSM 22257 / CCUG 43843 / 130Z), this protein is Transcriptional repressor NrdR.